The primary structure comprises 268 residues: Basic endochitinase CHB4 (268 aa).

Residues 1-24 (MALTKLSLVLFLCFLGLYSETVKS) form the signal peptide. Positions 25 to 59 (QNCGCAPNLCCSQFGYCGSTDAYCGTGCRSGPCRS) constitute a Chitin-binding type-1 domain. 7 disulfides stabilise this stretch: C27–C35, C29–C41, C34–C48, C52–C57, C92–C137, C150–C159, and C236–C268. The catalytic stretch occupies residues 71–268 (SVGSIVTQAF…GVDPGPNLSC (198 aa)). Catalysis depends on E132, which acts as the Proton donor. N-linked (GlcNAc...) asparagine glycosylation is present at N265.

It belongs to the glycosyl hydrolase 19 family. Chitinase class I subfamily.

It localises to the secreted. It is found in the extracellular space. The enzyme catalyses Random endo-hydrolysis of N-acetyl-beta-D-glucosaminide (1-&gt;4)-beta-linkages in chitin and chitodextrins.. Defense against chitin-containing fungal pathogens. This Brassica napus (Rape) protein is Basic endochitinase CHB4.